The chain runs to 241 residues: Glycerol-3-phosphate acyltransferase (241 aa).

The next 6 membrane-spanning stretches (helical) occupy residues 3–23 (ILYS…LLGS), 63–83 (IVFA…SAIV), 97–117 (YISP…PAYY), 131–151 (LIIS…LLVV), 156–176 (IVSL…WMPW), and 198–218 (LVNY…LVLV).

Belongs to the PlsY family. Probably interacts with PlsX.

The protein localises to the cell membrane. The catalysed reaction is an acyl phosphate + sn-glycerol 3-phosphate = a 1-acyl-sn-glycero-3-phosphate + phosphate. It functions in the pathway lipid metabolism; phospholipid metabolism. In terms of biological role, catalyzes the transfer of an acyl group from acyl-phosphate (acyl-PO(4)) to glycerol-3-phosphate (G3P) to form lysophosphatidic acid (LPA). This enzyme utilizes acyl-phosphate as fatty acyl donor, but not acyl-CoA or acyl-ACP. The polypeptide is Glycerol-3-phosphate acyltransferase (Mycoplasmopsis agalactiae (strain NCTC 10123 / CIP 59.7 / PG2) (Mycoplasma agalactiae)).